We begin with the raw amino-acid sequence, 378 residues long: MKFTIQKDRLVESVQDVLKAVSSRTTIPILTGIKIVASDDGVSFTGSDSDISIESFIPKEEGDKEIVTIEQPGSIVLQARFFSEIVKKLPMATVEIEVQNQYLTIIRSGKAEFNLNGLDADEYPHLPQIEEHHAIQIPTDLLKNLIRQTVFAVSTSETRPILTGVNWKVEQSELLCTATDSHRLALRKAKLDIPEDRSYNVVIPGKSLTELSKILDDNQELVDIVITETQVLFKAKNVLFFSRLLDGNYPDTTSLIPQDSKTEIIVNTKEFLQAIDRASLLAREGRNNVVKLSAKPAESIEISSNSPEIGKVVEAIVADQIEGEELNISFSPKYMLDALKVLEGAEIRVSFTGAMRPFLIRTPNDETIVQLILPVRTY.

It belongs to the beta sliding clamp family. Forms a ring-shaped head-to-tail homodimer around DNA which binds and tethers DNA polymerases and other proteins to the DNA. The DNA replisome complex has a single clamp-loading complex (3 tau and 1 each of delta, delta', psi and chi subunits) which binds 3 Pol III cores (1 core on the leading strand and 2 on the lagging strand) each with a beta sliding clamp dimer. Additional proteins in the replisome are other copies of gamma, psi and chi, Ssb, DNA helicase and RNA primase. Interacts with YabA, and via YabA, with DnaA. During sporulation probably interacts with SirA.

Its subcellular location is the cytoplasm. It localises to the nucleoid. Its function is as follows. Confers DNA tethering and processivity to DNA polymerases and other proteins. Acts as a clamp, forming a ring around DNA (a reaction catalyzed by the clamp-loading complex) which diffuses in an ATP-independent manner freely and bidirectionally along dsDNA. Initially characterized for its ability to contact the catalytic subunit of DNA polymerase III (Pol III), a complex, multichain enzyme responsible for most of the replicative synthesis in bacteria; Pol III exhibits 3'-5' exonuclease proofreading activity. The beta chain is required for initiation of replication as well as for processivity of DNA replication. Overexpression in vivo stimulates inititation of DNA replication from oriC. Increased levels of DnaN remove YabA from its association with DnaA on the chromosome, allowing DnaA to bind to its targets. Its interaction with DnaA probably serves as a sink to prevent excessive replication initiation. The sequence is that of Beta sliding clamp from Bacillus subtilis (strain 168).